The chain runs to 505 residues: Alpha-1-syntrophin (505 aa).

Disordered regions lie at residues 1-25 (MASGRRAPRTGLLELRAGAGSGAGG) and 40-77 (LTVSPADGDPGPEPGAPREQEPAQLNGAAEPGAGPPQL). PH domains lie at 6–269 (RAPR…AQVN) and 293–401 (DIKQ…DGCH). A PDZ domain is found at 87–170 (RVTVRKADAG…EVVLEVKYMK (84 aa)). Phosphoserine occurs at positions 101, 184, 189, 193, and 200. A disordered region spans residues 180-210 (TGGTSVGWDSPPASPLQRQPSSPGPTPRNFS). The SU domain maps to 449-505 (PFEKLQMSSDDGASLLFLDFGGAEGEIQLDLHSCPKTIVFIIHSFLSAKVTRLGLLA). The interval 483 to 505 (PKTIVFIIHSFLSAKVTRLGLLA) is calmodulin-binding.

Belongs to the syntrophin family. In terms of assembly, monomer and homodimer. Interacts with the other members of the syntrophin family SNTB1 and SNTB2; SGCG and SGCA of the dystrophin glycoprotein complex; NOS1; GRB2; the sodium channel proteins SCN4A and SCN5A; F-actin and calmodulin. Interacts with dystrophin protein DMD and related proteins DTNA and UTRN and with MAPK12, TGFA and GA. Interacts with MYOC; regulates muscle hypertrophy. Interacts with DTNB. In terms of processing, phosphorylated by CaM-kinase II. Phosphorylation may inhibit the interaction with DMD. In terms of tissue distribution, high expression in skeletal muscle and heart. Low expression in brain, pancreas, liver, kidney and lung. Not detected in placenta.

Its subcellular location is the cell membrane. The protein resides in the sarcolemma. It is found in the cell junction. The protein localises to the cytoplasm. It localises to the cytoskeleton. In terms of biological role, adapter protein that binds to and probably organizes the subcellular localization of a variety of membrane proteins. May link various receptors to the actin cytoskeleton and the extracellular matrix via the dystrophin glycoprotein complex. Plays an important role in synapse formation and in the organization of UTRN and acetylcholine receptors at the neuromuscular synapse. Binds to phosphatidylinositol 4,5-bisphosphate. This is Alpha-1-syntrophin (SNTA1) from Homo sapiens (Human).